Here is a 110-residue protein sequence, read N- to C-terminus: Large ribosomal subunit protein uL22 (110 aa).

Belongs to the universal ribosomal protein uL22 family. As to quaternary structure, part of the 50S ribosomal subunit.

Its function is as follows. This protein binds specifically to 23S rRNA; its binding is stimulated by other ribosomal proteins, e.g. L4, L17, and L20. It is important during the early stages of 50S assembly. It makes multiple contacts with different domains of the 23S rRNA in the assembled 50S subunit and ribosome. The globular domain of the protein is located near the polypeptide exit tunnel on the outside of the subunit, while an extended beta-hairpin is found that lines the wall of the exit tunnel in the center of the 70S ribosome. The polypeptide is Large ribosomal subunit protein uL22 (Campylobacter fetus subsp. fetus (strain 82-40)).